Reading from the N-terminus, the 339-residue chain is UDP-N-acetylenolpyruvoylglucosamine reductase (339 aa).

An FAD-binding PCMH-type domain is found at 18 to 189; the sequence is GIDVRARLLA…LRVRLRLTRR (172 aa). The active site involves Arg166. Catalysis depends on Ser239, which acts as the Proton donor. Residue Glu335 is part of the active site.

This sequence belongs to the MurB family. FAD serves as cofactor.

The protein resides in the cytoplasm. The enzyme catalyses UDP-N-acetyl-alpha-D-muramate + NADP(+) = UDP-N-acetyl-3-O-(1-carboxyvinyl)-alpha-D-glucosamine + NADPH + H(+). Its pathway is cell wall biogenesis; peptidoglycan biosynthesis. Cell wall formation. This Pseudomonas aeruginosa (strain ATCC 15692 / DSM 22644 / CIP 104116 / JCM 14847 / LMG 12228 / 1C / PRS 101 / PAO1) protein is UDP-N-acetylenolpyruvoylglucosamine reductase.